The chain runs to 302 residues: Light-independent protochlorophyllide reductase iron-sulfur ATP-binding protein (302 aa).

ATP-binding positions include Gly-46–Thr-51 and Lys-75. Ser-50 is a binding site for Mg(2+). 2 residues coordinate [4Fe-4S] cluster: Cys-131 and Cys-165. An ATP-binding site is contributed by Asn-216 to Arg-217.

This sequence belongs to the NifH/BchL/ChlL family. As to quaternary structure, homodimer. Protochlorophyllide reductase is composed of three subunits; BchL, BchN and BchB. [4Fe-4S] cluster is required as a cofactor.

The enzyme catalyses chlorophyllide a + oxidized 2[4Fe-4S]-[ferredoxin] + 2 ADP + 2 phosphate = protochlorophyllide a + reduced 2[4Fe-4S]-[ferredoxin] + 2 ATP + 2 H2O. Its pathway is porphyrin-containing compound metabolism; bacteriochlorophyll biosynthesis (light-independent). Component of the dark-operative protochlorophyllide reductase (DPOR) that uses Mg-ATP and reduced ferredoxin to reduce ring D of protochlorophyllide (Pchlide) to form chlorophyllide a (Chlide). This reaction is light-independent. The L component serves as a unique electron donor to the NB-component of the complex, and binds Mg-ATP. This is Light-independent protochlorophyllide reductase iron-sulfur ATP-binding protein from Methylocella silvestris (strain DSM 15510 / CIP 108128 / LMG 27833 / NCIMB 13906 / BL2).